A 188-amino-acid polypeptide reads, in one-letter code: Inosine triphosphate pyrophosphatase (188 aa).

12 to 17 (TGNKNK) provides a ligand contact to ITP. E40 serves as a coordination point for Mg(2+). ITP contacts are provided by residues K52, 68-69 (DT), K85, 144-147 (FGWD), K165, and 170-171 (HR).

This sequence belongs to the HAM1 NTPase family. As to quaternary structure, homodimer. It depends on Mg(2+) as a cofactor. Requires Mn(2+) as cofactor.

It localises to the cytoplasm. The protein localises to the nucleus. The enzyme catalyses ITP + H2O = IMP + diphosphate + H(+). The catalysed reaction is dITP + H2O = dIMP + diphosphate + H(+). It carries out the reaction XTP + H2O = XMP + diphosphate + H(+). Pyrophosphatase that hydrolyzes non-canonical purine nucleotides such as inosine triphosphate (ITP), deoxyinosine triphosphate (dITP) or xanthosine 5'-triphosphate (XTP) to their respective monophosphate derivatives. The enzyme does not distinguish between the deoxy- and ribose forms. Probably excludes non-canonical purines from RNA and DNA precursor pools, thus preventing their incorporation into RNA and DNA and avoiding chromosomal lesions. This Phaeosphaeria nodorum (strain SN15 / ATCC MYA-4574 / FGSC 10173) (Glume blotch fungus) protein is Inosine triphosphate pyrophosphatase.